The chain runs to 179 residues: Large ribosomal subunit protein uL5 (179 aa).

The protein belongs to the universal ribosomal protein uL5 family. In terms of assembly, part of the 50S ribosomal subunit; part of the 5S rRNA/L5/L18/L25 subcomplex. Contacts the 5S rRNA and the P site tRNA. Forms a bridge to the 30S subunit in the 70S ribosome.

Functionally, this is one of the proteins that bind and probably mediate the attachment of the 5S RNA into the large ribosomal subunit, where it forms part of the central protuberance. In the 70S ribosome it contacts protein S13 of the 30S subunit (bridge B1b), connecting the 2 subunits; this bridge is implicated in subunit movement. Contacts the P site tRNA; the 5S rRNA and some of its associated proteins might help stabilize positioning of ribosome-bound tRNAs. This chain is Large ribosomal subunit protein uL5, found in Burkholderia ambifaria (strain MC40-6).